The following is a 65-amino-acid chain: Large ribosomal subunit protein bL35 (65 aa).

This sequence belongs to the bacterial ribosomal protein bL35 family.

The sequence is that of Large ribosomal subunit protein bL35 from Polynucleobacter asymbioticus (strain DSM 18221 / CIP 109841 / QLW-P1DMWA-1) (Polynucleobacter necessarius subsp. asymbioticus).